The chain runs to 328 residues: Malate dehydrogenase (328 aa).

11 to 17 (GAAGQIG) contacts NAD(+). Positions 94 and 100 each coordinate substrate. NAD(+) contacts are provided by residues Asn107, Gln114, and 131–133 (VGN). Asn133 and Arg164 together coordinate substrate. The active-site Proton acceptor is His189.

Belongs to the LDH/MDH superfamily. MDH type 2 family.

It catalyses the reaction (S)-malate + NAD(+) = oxaloacetate + NADH + H(+). Its function is as follows. Catalyzes the reversible oxidation of malate to oxaloacetate. This chain is Malate dehydrogenase, found in Xylella fastidiosa (strain 9a5c).